A 148-amino-acid chain; its full sequence is Putative FAD-linked sulfhydryl oxidase 096R (148 aa).

The 103-residue stretch at 1–103 (MSIDPKLWGN…LAAKTVFQRY (103 aa)) folds into the ERV/ALR sulfhydryl oxidase domain. Cysteines 48 and 51 form a disulfide. The helical transmembrane segment at 122 to 142 (WSPWLTTALAVILVVVVAGIG) threads the bilayer.

This sequence belongs to the IIV-6 347L family. Requires FAD as cofactor.

The protein resides in the membrane. It carries out the reaction 2 R'C(R)SH + O2 = R'C(R)S-S(R)CR' + H2O2. In terms of biological role, FAD-dependent sulfhydryl oxidase that catalyzes disulfide bond formation. In Aedes vexans (Inland floodwater mosquito), this protein is Putative FAD-linked sulfhydryl oxidase 096R.